The following is a 528-amino-acid chain: Ceramide glucosyltransferase (528 aa).

At 1–6 the chain is on the lumenal side; the sequence is MYSFIE. Residues 7 to 27 traverse the membrane as a helical segment; that stretch reads CIAGALFVLGCVVVTLVVIGV. The Cytoplasmic segment spans residues 28–369; it reads RALLYNFRNR…TVLSATILEP (342 aa). Asp94 is a short sequence motif (D1). Asp154 is a short sequence motif (D2). Position 308 (Asp308) is a short sequence motif, D3. The active-site Proton acceptor is Asp308. The (Q/R)XXRW motif lies at 349–353; sequence RRSRW. Residues 370–390 traverse the membrane as a helical segment; it reads FTECFLFATYMSLAMTTIPVL. The Lumenal segment spans residues 391–402; that stretch reads SQNLGIPKTWNA. A helical transmembrane segment spans residues 403-423; that stretch reads TAIAWFTITTLWMLIDYIGYL. The Cytoplasmic segment spans residues 424–457; the sequence is RLHSGVTMEVDEHTPYFAKGFKNTGGIKRRPFLE. A helical transmembrane segment spans residues 458–478; that stretch reads FLAAWIGREGLAFPVWAYAVV. The Lumenal segment spans residues 479 to 528; sequence FGNTVNWRGRLFYIHWDTTVDAVEPREERTREVRTPELERGPSRNKHRVD. Residues 503-528 are disordered; sequence PREERTREVRTPELERGPSRNKHRVD.

This sequence belongs to the glycosyltransferase 2 family.

It localises to the golgi apparatus membrane. The enzyme catalyses an N-acylsphing-4-enine + UDP-alpha-D-glucose = a beta-D-glucosyl-(1&lt;-&gt;1')-N-acylsphing-4-enine + UDP + H(+). It functions in the pathway lipid metabolism; sphingolipid metabolism. Functionally, catalyzes the final step in the biosynthesis of the membrane lipid glucosylceramide (GluCer), the transfer of glucose to ceramide. Glucosylceramides play important roles in growth, differentiation and pathogenicity. Contribution to fungal pathogenesis is host-dependent. The chain is Ceramide glucosyltransferase from Gibberella zeae (strain ATCC MYA-4620 / CBS 123657 / FGSC 9075 / NRRL 31084 / PH-1) (Wheat head blight fungus).